The primary structure comprises 244 residues: Small ribosomal subunit protein eS4 (244 aa).

The S4 RNA-binding domain maps to 43-106 (LPLLLVVRDV…DETYLVLFDE (64 aa)).

This sequence belongs to the eukaryotic ribosomal protein eS4 family.

This chain is Small ribosomal subunit protein eS4, found in Methanococcus maripaludis (strain DSM 14266 / JCM 13030 / NBRC 101832 / S2 / LL).